Reading from the N-terminus, the 166-residue chain is PTS system glucose-specific EIIA component (166 aa).

The 105-residue stretch at 34–138 (DPVFAQKMMG…SVISPIIITN (105 aa)) folds into the PTS EIIA type-1 domain. Zn(2+)-binding residues include histidine 71 and histidine 86. Histidine 86 functions as the Tele-phosphohistidine intermediate; for EIIA activity in the catalytic mechanism. Position 86 is a phosphohistidine; by HPr (histidine 86).

As to quaternary structure, heterodimer with glycerol kinase (glpk). Requires Zn(2+) as cofactor.

The protein resides in the cytoplasm. Functionally, the phosphoenolpyruvate-dependent sugar phosphotransferase system (sugar PTS), a major carbohydrate active transport system, catalyzes the phosphorylation of incoming sugar substrates concomitantly with their translocation across the cell membrane. The enzyme II complex composed of PtsG and Crr is involved in glucose transport. This chain is PTS system glucose-specific EIIA component (crr), found in Staphylococcus aureus (strain Mu50 / ATCC 700699).